The sequence spans 1340 residues: Lysine-specific demethylase ELF6 (1340 aa).

The JmjN domain maps to 16-57 (APVFRPTDTEFADPIAYISKIEKEASAFGICKIIPPLPKPSK). Positions 195-245 (QRKRRGRGFYQRKTENNDPSGKNGEKSSPEVEKAPLASTSLSSQDSSKQKN) are disordered. The span at 217–227 (NGEKSSPEVEK) shows a compositional bias: basic and acidic residues. A JmjC domain is found at 262–428 (NSSWNLQMIA…VAKEAAVRRA (167 aa)). His305, Glu307, and His396 together coordinate Fe cation. The Nuclear localization signal 1 motif lies at 818–825 (GKKEEKII). The disordered stretch occupies residues 1092 to 1225 (GEPLESSDIL…SRQQEVPTTT (134 aa)). Over residues 1099–1115 (DILSSSNGDEASSNGLQ) the composition is skewed to polar residues. The span at 1124 to 1133 (ESEVSSSENT) shows a compositional bias: low complexity. A compositionally biased stretch (basic and acidic residues) spans 1188–1201 (SLKHTETSDEEKKP). The segment covering 1215-1225 (GSRQQEVPTTT) has biased composition (polar residues). C2H2-type zinc fingers lie at residues 1228 to 1250 (NRCY…THKR), 1251 to 1275 (NRCT…QRVH), 1281 to 1305 (FECS…LRLH), and 1311 to 1337 (YICK…KTMH). Cys1230, Cys1235, His1248, Cys1253, Cys1258, His1265, His1271, His1275, Cys1283, Cys1288, His1301, His1305, Cys1313, Cys1318, His1331, and His1337 together coordinate Zn(2+). The Nuclear localization signal 2 signature appears at 1248–1255 (HKRNRCTH). A DNA-binding region spans residues 1260–1333 (KKFRAHKYLV…FVSDYSRHRR (74 aa)).

It belongs to the JHDM3 histone demethylase family. Interacts with BZR2 (via N-terminus). As to expression, expressed at low levels in seedlings, cotyledons and leaves. Detected in inflorescences, stems, roots and siliques but not in shoot apical meristems or root tips. Accumulates in flowers and embryos.

It localises to the nucleus. The catalysed reaction is N(6),N(6),N(6)-trimethyl-L-lysyl(27)-[histone H3] + 2-oxoglutarate + O2 = N(6),N(6)-dimethyl-L-lysyl(27)-[histone H3] + formaldehyde + succinate + CO2. The enzyme catalyses N(6),N(6)-dimethyl-L-lysyl(27)-[histone H3] + 2-oxoglutarate + O2 = N(6)-methyl-L-lysyl(27)-[histone H3] + formaldehyde + succinate + CO2. In terms of biological role, histone demethylase that demethylates 'Lys-27' (H3K27me) of histone H3, thus acting as a positive regulator of gene expression. Demethylates tri-methylated (H3K27me3) and di-methylated (H3K27me2) H3K27me. Inactive on H3K27me1, H3K4me3, H3K9me2 and H3K36me3. Acts as a repressor of the photoperiodic flowering pathway and of FT. May also be active on H3K4me. Binds around the transcription start site of the FT locus. Required for epigenetic reprogramming by resetting the expression of the floral repressor FLC locus, thus aluviating cold-mediated FLC epigenetically silencing occurring during vernalization and preventing inapropriate epigenetic states inheritence. Together with REF6, required for H3K27me3 resetting (especially in constitutive heterochromatin within the pericentromeric regions) and transgenerational inheritance of histone marks, thus acting in safeguarding genome and epigenome integrity during sexual reproduction. The sequence is that of Lysine-specific demethylase ELF6 from Arabidopsis thaliana (Mouse-ear cress).